A 263-amino-acid polypeptide reads, in one-letter code: Zinc import ATP-binding protein ZnuC (263 aa).

An ABC transporter domain is found at 11–226 (VELKNINVVF…PTFIHFFGDQ (216 aa)). 43-50 (GPNGGGKS) lines the ATP pocket.

It belongs to the ABC transporter superfamily. Zinc importer (TC 3.A.1.15.5) family. In terms of assembly, the complex is composed of two ATP-binding proteins (ZnuC), two transmembrane proteins (ZnuB) and a solute-binding protein (ZnuA).

It is found in the cell inner membrane. The enzyme catalyses Zn(2+)(out) + ATP(in) + H2O(in) = Zn(2+)(in) + ADP(in) + phosphate(in) + H(+)(in). Part of the ABC transporter complex ZnuABC involved in zinc import. Responsible for energy coupling to the transport system. The chain is Zinc import ATP-binding protein ZnuC from Pasteurella multocida (strain Pm70).